The chain runs to 508 residues: MASLLWRDTSKNIAAILEKLPADYAVDYDVPNNVEDGYITINKKNFTYHVVISGVRKYSPDVEAIVKKKSGLKSIITIEKVEKIEPLSFMEFRVGGKTLEAMGSFEVAERQVTEIKEKYGENLSEDVQKVLDDARAMGFTLPESVAEEIARRRTEWGEKAYKNILKRIGEEIGNELIDPYEAVGIIAAQSIGEPGTQMTMRTFHFAGVREMNVTLGLPRLIEIVDARRIPSTPSMTIYLRPEYETNDEVVMDVVKRLENTSISDVADIITDIGELTVTVRPDPRKTKDRLIEMEDIMNAISKIKGITVMEDSGQIIIKPQQESFKKLYLLQEQIKGLTIKGISGIKRAIARVEGKEHRWVIYTQGSNLKDVLEVDEVDPTRTYTNDIVEIANVLGIEAARNAILNEALRTLQEQGLNVDVRHLMLVADMMTFSGSVRAVGRTGISGRKSSVLARAAFEITTKHLLRAGIMGEVDKLAGVAENIIVGQPITLGTGAVDIIYKGYPKTKK.

Residues 1 to 123 (MASLLWRDTS…EIKEKYGENL (123 aa)) form a unknown region. The DNA-directed RNA polymerase subunit Rpo1C stretch occupies residues 124 to 508 (SEDVQKVLDD…IYKGYPKTKK (385 aa)).

It belongs to the RNA polymerase beta' chain family. In terms of assembly, part of the RNA polymerase complex.

It localises to the cytoplasm. The enzyme catalyses RNA(n) + a ribonucleoside 5'-triphosphate = RNA(n+1) + diphosphate. Its function is as follows. DNA-dependent RNA polymerase (RNAP) catalyzes the transcription of DNA into RNA using the four ribonucleoside triphosphates as substrates. Forms part of the jaw domain. The protein is DNA-directed RNA polymerase subunit Rpo1C of Thermoplasma acidophilum (strain ATCC 25905 / DSM 1728 / JCM 9062 / NBRC 15155 / AMRC-C165).